We begin with the raw amino-acid sequence, 441 residues long: Chitinase-like protein Idgf3 (441 aa).

The first 23 residues, 1–23 (MTGSLWLSLALSLAVLAQFKVSA), serve as a signal peptide directing secretion. In terms of domain architecture, GH18 spans 25-441 (PNLVCFYDSQ…MLRAIKYRLL (417 aa)). Cys-29 and Cys-56 are joined by a disulfide. Asn-221 carries N-linked (GlcNAc...) asparagine glycosylation. Positions 309–331 (SGDSGMPVVPSTQGPAPAGPQSK) are disordered. A disulfide bridge links Cys-342 with Cys-425.

It belongs to the glycosyl hydrolase 18 family. IDGF subfamily. In terms of processing, glycosylated.

The protein localises to the secreted. In terms of biological role, cooperates with insulin-like peptides to stimulate the proliferation, polarization and motility of imaginal disk cells. May act by stabilizing the binding of insulin-like peptides to its receptor through a simultaneous interaction with both molecules to form a multiprotein signaling complex. This Drosophila yakuba (Fruit fly) protein is Chitinase-like protein Idgf3 (Idgf3).